The primary structure comprises 272 residues: SKA complex subunit 1 homolog (272 aa).

The stretch at 48–75 (ALSSMELQVQSIKDRLREETEAIPKAKK) forms a coiled coil.

It belongs to the SKA1 family.

This Arabidopsis thaliana (Mouse-ear cress) protein is SKA complex subunit 1 homolog.